Reading from the N-terminus, the 1254-residue chain is Structural polyprotein (1254 aa).

A necessary for nucleocapsid assembly and virus assembly region spans residues methionine 1–phenylalanine 33. The interval phenylalanine 33 to lysine 68 is host transcription inhibition. The short motif at leucine 41–leucine 48 is the Supraphysiological nuclear export signal element. A disordered region spans residues methionine 45–valine 119. Positions lysine 64–lysine 68 match the Nuclear localization signal motif. Over residues glycine 80–lysine 92 the composition is skewed to basic residues. A binding to the viral RNA region spans residues alanine 91–threonine 127. Threonine 93 and threonine 108 each carry phosphothreonine. Basic residues predominate over residues asparagine 104–methionine 118. Residues proline 112–lysine 126 are ribosome-binding. A Phosphoserine modification is found at serine 124. Residues lysine 126–tryptophan 275 form the Peptidase S3 domain. Threonine 127 carries the post-translational modification Phosphothreonine. Active-site charge relay system residues include histidine 152, aspartate 174, and serine 226. The tract at residues serine 276–valine 287 is functions as an uncleaved signal peptide for the precursor of protein E3/E2. Residues serine 276 to threonine 701 lie on the Extracellular side of the membrane. Residues asparagine 286, asparagine 546, and asparagine 652 are each glycosylated (N-linked (GlcNAc...) asparagine; by host). A helical transmembrane segment spans residues isoleucine 702 to leucine 722. Topologically, residues phenylalanine 723 to alanine 757 are cytoplasmic. S-palmitoyl cysteine; by host attachment occurs at residues cysteine 730, cysteine 750, and cysteine 751. Residues glutamate 758–glutamine 772 are Extracellular-facing. The chain crosses the membrane as a helical span at residues glutamine 773–leucine 793. At arginine 794 to cysteine 795 the chain is on the cytoplasmic side. Residues valine 796 to alanine 816 form a helical membrane-spanning segment. Residues threonine 817–serine 1224 lie on the Extracellular side of the membrane. Disulfide bonds link cysteine 861–cysteine 926, cysteine 874–cysteine 906, cysteine 875–cysteine 908, and cysteine 880–cysteine 890. The E1 fusion peptide loop stretch occupies residues valine 896–threonine 913. Residue asparagine 946 is glycosylated (N-linked (GlcNAc...) asparagine; by host). Disulfide bonds link cysteine 1071–cysteine 1083, cysteine 1113–cysteine 1188, cysteine 1118–cysteine 1192, and cysteine 1140–cysteine 1182. The helical transmembrane segment at leucine 1225–methionine 1245 threads the bilayer. The Cytoplasmic segment spans residues tyrosine 1246–asparagine 1254.

Homodimer. Homomultimer. Interacts with host karyopherin KPNA4; this interaction allows the nuclear import of the viral capsid protein. Interacts with spike glycoprotein E2. Interacts with host IRAK1; the interaction leads to inhibition of IRAK1-dependent signaling. Part of a tetrameric complex composed of host CRM1, host importin alpha/beta dimer and the viral capsid; this complex blocks the receptor-mediated transport through the nuclear pore. Interacts with host phosphatase PPP1CA; this interaction dephosphorylates the capsid protein, which increases its ability to bind to the viral genome. As to quaternary structure, the precursor of protein E3/E2 and E1 form a heterodimer shortly after synthesis. In terms of assembly, interacts with spike glycoprotein E2. The precursor of protein E3/E2 and E1 form a heterodimer shortly after synthesis. Processing of the precursor of protein E3/E2 into E2 and E3 results in a heterodimer of the spike glycoproteins E2 and E1. Spike at virion surface are constituted of three E2-E1 heterodimers. After target cell attachment and endocytosis, E1 change conformation to form homotrimers. Interacts with 6K protein. Interacts (via fusion peptide loop) with host LDLRAD3 (via domain LDL-receptor class A 1); this interaction mediates viral entry to the host cell. 2 adjacent E2-E1 heterodimers in the trimeric spike interact with host LDLRAD3. Interacts with spike glycoprotein E1. Processing of the precursor of protein E3/E2 into E2 and E3 results in a heterodimer of the spike glycoproteins E2 and E1. Spike at virion surface are constituted of a trimer of E2-E1 heterodimers. Interacts with 6K protein. Interacts with host LDLRAD3 (via domain LDL-receptor class A 1); this interaction mediates viral entry to the host cell. 2 adjacent E2-E1 heterodimers in the trimeric spike interact with host LDLRAD3. As to quaternary structure, oligomer. Interacts with spike glycoprotein E1. Interacts with spike glycoprotein E2. Structural polyprotein: Specific enzymatic cleavages in vivo yield mature proteins. Capsid protein is auto-cleaved during polyprotein translation, unmasking a signal peptide at the N-terminus of the precursor of E3/E2. The remaining polyprotein is then targeted to the host endoplasmic reticulum, where host signal peptidase cleaves it into pE2, 6K and E1 proteins. pE2 is further processed to mature E3 and E2 by host furin in trans-Golgi vesicle. In terms of processing, phosphorylated on serine and threonine residues. Post-translationally, palmitoylated via thioester bonds. These palmitoylations may induce disruption of the C-terminus transmembrane. This would result in the reorientation of E2 C-terminus from lumenal to cytoplasmic side. N-glycosylated. In terms of processing, palmitoylated via thioester bonds.

Its subcellular location is the virion. It is found in the host cytoplasm. The protein localises to the host cell membrane. The protein resides in the host nucleus. It localises to the virion membrane. The enzyme catalyses Autocatalytic release of the core protein from the N-terminus of the togavirus structural polyprotein by hydrolysis of a -Trp-|-Ser- bond.. In terms of biological role, forms an icosahedral capsid with a T=4 symmetry composed of 240 copies of the capsid protein surrounded by a lipid membrane through which penetrate 80 spikes composed of trimers of E1-E2 heterodimers. The capsid protein binds to the viral RNA genome at a site adjacent to a ribosome binding site for viral genome translation following genome release. Possesses a protease activity that results in its autocatalytic cleavage from the nascent structural protein. Following its self-cleavage, the capsid protein transiently associates with ribosomes, and within several minutes the protein binds to viral RNA and rapidly assembles into icosahedric core particles. The resulting nucleocapsid eventually associates with the cytoplasmic domain of the spike glycoprotein E2 at the cell membrane, leading to budding and formation of mature virions. In case of infection, new virions attach to target cells and after clathrin-mediated endocytosis their membrane fuses with the host endosomal membrane. This leads to the release of the nucleocapsid into the cytoplasm, followed by an uncoating event necessary for the genomic RNA to become accessible. The uncoating might be triggered by the interaction of capsid proteins with ribosomes. Binding of ribosomes would release the genomic RNA since the same region is genomic RNA-binding and ribosome-binding. Specifically inhibits interleukin-1 receptor-associated kinase 1/IRAK1-dependent signaling during viral entry, representing a means by which the alphaviruses may evade innate immune detection and activation prior to viral gene expression. Inhibits host transcription. Forms a tetrameric complex with XPO1/CRM1 and the nuclear import receptor importin. This complex blocks the central channel of host nuclear pores thereby inhibiting the receptor-mediated nuclear transport and thus the host mRNA and rRNA transcription. The inhibition of transcription is linked to a cytopathic effect on the host cell. Functionally, provides the signal sequence for the translocation of the precursor of protein E3/E2 to the host endoplasmic reticulum. Furin-cleaved E3 remains associated with spike glycoprotein E1 and mediates pH protection of the latter during the transport via the secretory pathway. After virion release from the host cell, the assembly protein E3 is gradually released in the extracellular space. Its function is as follows. Plays a role in viral attachment to target host cell, by binding to the cell receptor LDLRAD3. Synthesized as a p62 precursor which is processed by furin at the cell membrane just before virion budding, giving rise to E2-E1 heterodimer. The p62-E1 heterodimer is stable, whereas E2-E1 is unstable and dissociate at low pH. p62 is processed at the last step, presumably to avoid E1 fusion activation before its final export to cell surface. E2 C-terminus contains a transitory transmembrane that would be disrupted by palmitoylation, resulting in reorientation of the C-terminal tail from lumenal to cytoplasmic side. This step is critical since E2 C-terminus is involved in budding by interacting with capsid proteins. This release of E2 C-terminus in cytoplasm occurs lately in protein export, and precludes premature assembly of particles at the endoplasmic reticulum membrane. Acts as a viroporin that participates in virus glycoprotein processing and transport to the plasma membrane, cell permeabilization and budding of viral particles. Disrupts the calcium homeostasis of the cell, probably at the endoplasmic reticulum level. This leads to cytoplasmic calcium elevation. Because of its lipophilic properties, the 6K protein is postulated to influence the selection of lipids that interact with the transmembrane domains of the glycoproteins, which, in turn, affects the deformability of the bilayer required for the extreme curvature that occurs as budding proceeds. Present in low amount in virions, about 3% compared to viral glycoproteins. In terms of biological role, class II viral fusion protein. Fusion activity is inactive as long as E1 is bound to E2 in mature virion. After virus attachment to cell receptor LDLRAD3 and endocytosis, acidification of the endosome induce dissociation of E1/E2 heterodimer and concomitant trimerization of the E1 subunits. This E1 trimer is fusion active, and promotes release of viral nucleocapsid in cytoplasm after endosome and viral membrane fusion. Efficient fusion requires the presence of cholesterol and sphingolipid in the target membrane. This Bos taurus (Bovine) protein is Structural polyprotein.